Consider the following 526-residue polypeptide: DDB1- and CUL4-associated factor 17 (526 aa).

The next 2 membrane-spanning stretches (helical) occupy residues 200 to 220 (ILMR…MLEI) and 237 to 257 (GVLA…EYIV).

It is found in the membrane. It localises to the nucleus. The protein localises to the nucleolus. Its pathway is protein modification; protein ubiquitination. Functionally, may function as a substrate receptor for CUL4-DDB1 E3 ubiquitin-protein ligase complex. The sequence is that of DDB1- and CUL4-associated factor 17 (dcaf17) from Danio rerio (Zebrafish).